Consider the following 303-residue polypeptide: Pycsar effector protein XpPycTIR (303 aa).

Leu14–Arg138 contributes to the a nucleoside 3',5'-cyclic phosphate binding site. Residues Arg154–Tyr273 form a TIR-like region.

Its subcellular location is the cytoplasm. The catalysed reaction is NAD(+) + H2O = ADP-D-ribose + nicotinamide + H(+). Its function is as follows. Pycsar (pyrimidine cyclase system for antiphage resistance) provides immunity against bacteriophage. The pyrimidine cyclase (PycC) synthesizes cyclic nucleotides in response to infection; these serve as specific second messenger signals. The signals activate the adjacent effector, leading to bacterial cell death and abortive phage infection. A clade B Pycsar system. In terms of biological role, the effector gene of a two-gene Pycsar system. Expression of this and adjacent uridylate cyclase XpPycC (AC P0DV28) confers resistance to bacteriophage T7. When cells expressing the Pycsar system are infected by phage T7 at low multiplicity of infection (0.2 MOI) the culture survivey, at 2.0 MOI bacteria enter growth arrest. The same cells enter growth arrest after exposure to 2.5 mM cUMP but not cCMP; the effector protein responds only to the cUMP usually produced by its cognate NTP cyclase. NAD(+) levels in infected cells are depleted between 5 and 10 minutes after infection with T7 at MOI of 2. Probably only responds to cUMP. The polypeptide is Pycsar effector protein XpPycTIR (Xanthomonas perforans).